The chain runs to 103 residues: Small ribosomal subunit protein uS10 (103 aa).

Belongs to the universal ribosomal protein uS10 family. In terms of assembly, part of the 30S ribosomal subunit.

Involved in the binding of tRNA to the ribosomes. This is Small ribosomal subunit protein uS10 from Psychromonas ingrahamii (strain DSM 17664 / CCUG 51855 / 37).